The sequence spans 237 residues: MRPSKRAADELRPVSLERAVSRYAEGSCLVSFGNTRVLCTASLEERAPPWLRGSGKGWVTAEYAMLPRATHERTRREVGSGKPSGRTQEIQRLIGRSLRAVTNLPAMGERQITIDCDVIQADGGTRTAAITGAWVALHDCFAWMRTRSIISVDPLRDHVAAVSCGLYKGTPVLDLDYAEDSAAETDANFVLTGRGGIVEVQGTAEMEPFTQEQLLELLGLARAGTERLVALQKEAIA.

Phosphate is bound by residues Arg-86 and 124–126 (GTR).

This sequence belongs to the RNase PH family. Homohexameric ring arranged as a trimer of dimers.

The catalysed reaction is tRNA(n+1) + phosphate = tRNA(n) + a ribonucleoside 5'-diphosphate. Phosphorolytic 3'-5' exoribonuclease that plays an important role in tRNA 3'-end maturation. Removes nucleotide residues following the 3'-CCA terminus of tRNAs; can also add nucleotides to the ends of RNA molecules by using nucleoside diphosphates as substrates, but this may not be physiologically important. Probably plays a role in initiation of 16S rRNA degradation (leading to ribosome degradation) during starvation. The protein is Ribonuclease PH of Methylobacterium radiotolerans (strain ATCC 27329 / DSM 1819 / JCM 2831 / NBRC 15690 / NCIMB 10815 / 0-1).